We begin with the raw amino-acid sequence, 170 residues long: Adenine phosphoribosyltransferase (170 aa).

This sequence belongs to the purine/pyrimidine phosphoribosyltransferase family. In terms of assembly, homodimer.

Its subcellular location is the cytoplasm. The catalysed reaction is AMP + diphosphate = 5-phospho-alpha-D-ribose 1-diphosphate + adenine. It functions in the pathway purine metabolism; AMP biosynthesis via salvage pathway; AMP from adenine: step 1/1. Its function is as follows. Catalyzes a salvage reaction resulting in the formation of AMP, that is energically less costly than de novo synthesis. The protein is Adenine phosphoribosyltransferase of Bacillus velezensis (strain DSM 23117 / BGSC 10A6 / LMG 26770 / FZB42) (Bacillus amyloliquefaciens subsp. plantarum).